Here is a 149-residue protein sequence, read N- to C-terminus: Small ribosomal subunit protein uS11z (149 aa).

Residues 130–149 are disordered; sequence VTPVPTDSTRRKGGRRGRRL. Basic residues predominate over residues 140 to 149; sequence RKGGRRGRRL.

The protein belongs to the universal ribosomal protein uS11 family.

This Zea mays (Maize) protein is Small ribosomal subunit protein uS11z.